A 308-amino-acid chain; its full sequence is tRNA dimethylallyltransferase (308 aa).

11–18 (GPTGIGKT) serves as a coordination point for ATP. 13–18 (TGIGKT) contributes to the substrate binding site. The segment at 36 to 39 (DSMQ) is interaction with substrate tRNA.

The protein belongs to the IPP transferase family. As to quaternary structure, monomer. Mg(2+) is required as a cofactor.

The enzyme catalyses adenosine(37) in tRNA + dimethylallyl diphosphate = N(6)-dimethylallyladenosine(37) in tRNA + diphosphate. Catalyzes the transfer of a dimethylallyl group onto the adenine at position 37 in tRNAs that read codons beginning with uridine, leading to the formation of N6-(dimethylallyl)adenosine (i(6)A). In Lactobacillus gasseri (strain ATCC 33323 / DSM 20243 / BCRC 14619 / CIP 102991 / JCM 1131 / KCTC 3163 / NCIMB 11718 / NCTC 13722 / AM63), this protein is tRNA dimethylallyltransferase.